Reading from the N-terminus, the 200-residue chain is ATP synthase subunit s, mitochondrial (200 aa).

The N-terminal 25 residues, 1–25 (MMMFGKISRQLFSLKKIPWSCDSRY), are a transit peptide targeting the mitochondrion. The segment at 1-61 (MMMFGKISRQ…SEWLLRCGAK (61 aa)) is N-terminal domain. Glycine 59 is a Mg(2+) binding site. 4 LRR repeats span residues 62–87 (VRYC…RYKI), 88–116 (QAID…RITL), 117–141 (CRCH…KSLL), and 142–173 (ELEI…LSDL). Mg(2+) is bound at residue threonine 93.

It belongs to the ATP synthase subunit s family. In terms of assembly, homotetramer. Associates with ATP synthase.

It localises to the mitochondrion. The protein resides in the mitochondrion inner membrane. Its function is as follows. Involved in regulation of mitochondrial membrane ATP synthase. Necessary for H(+) conduction of ATP synthase. Facilitates energy-driven catalysis of ATP synthesis by blocking a proton leak through an alternative proton exit pathway. This Rattus norvegicus (Rat) protein is ATP synthase subunit s, mitochondrial.